A 307-amino-acid chain; its full sequence is Aspartate carbamoyltransferase catalytic subunit (307 aa).

Positions 54 and 55 each coordinate carbamoyl phosphate. L-aspartate is bound at residue lysine 83. The carbamoyl phosphate site is built by arginine 104, histidine 132, and glutamine 135. Residues arginine 165 and arginine 228 each coordinate L-aspartate. Positions 267 and 268 each coordinate carbamoyl phosphate.

Belongs to the aspartate/ornithine carbamoyltransferase superfamily. ATCase family. As to quaternary structure, heterododecamer (2C3:3R2) of six catalytic PyrB chains organized as two trimers (C3), and six regulatory PyrI chains organized as three dimers (R2).

The catalysed reaction is carbamoyl phosphate + L-aspartate = N-carbamoyl-L-aspartate + phosphate + H(+). Its pathway is pyrimidine metabolism; UMP biosynthesis via de novo pathway; (S)-dihydroorotate from bicarbonate: step 2/3. Catalyzes the condensation of carbamoyl phosphate and aspartate to form carbamoyl aspartate and inorganic phosphate, the committed step in the de novo pyrimidine nucleotide biosynthesis pathway. The protein is Aspartate carbamoyltransferase catalytic subunit of Clostridium botulinum (strain ATCC 19397 / Type A).